The sequence spans 319 residues: Large ribosomal subunit protein uL10 (319 aa).

Residues 286-319 (AGDSGASAAPKEEEKAAEPEEESDEEMGFSLFDD) are disordered. The segment covering 304-319 (PEEESDEEMGFSLFDD) has biased composition (acidic residues).

It belongs to the universal ribosomal protein uL10 family. As to quaternary structure, P0 forms a pentameric complex by interaction with dimers of P1 and P2. Post-translationally, phosphorylated.

Its function is as follows. Ribosomal protein P0 is the functional equivalent of E.coli protein L10. This chain is Large ribosomal subunit protein uL10 (RP-P0), found in Zea mays (Maize).